Consider the following 1177-residue polypeptide: Lon protease homolog, mitochondrial (1177 aa).

Disordered stretches follow at residues 72 to 197 (RTNS…KSPA) and 353 to 386 (AKKA…DSST). Over residues 103–150 (RGRELWVQEKDKSDKPEKSDKPDKTDKTDKDKPEKQDKDKTDKPEKTK) the composition is skewed to basic and acidic residues. The segment covering 154-182 (TPSSTASTGAGEAAAPPSAPPSGSGSSSS) has biased composition (low complexity). One can recognise a Lon N-terminal domain in the interval 203–505 (ILAVPISDRP…RALILLKREH (303 aa)). Residues 353–383 (AKKAKSGKTEDSKHDSKVTSKDGKETTEKYD) show a composition bias toward basic and acidic residues. 657–664 (GPPGVGKT) provides a ligand contact to ATP. Positions 883–916 (EKDKESAEKKTTKSKSKEVNEEPAAKEEKDKATE) are enriched in basic and acidic residues. The segment at 883-932 (EKDKESAEKKTTKSKSKEVNEEPAAKEEKDKATESAESSETKVGTKAPPV) is disordered. Positions 964 to 1150 (DPPPGVVMGL…QDVYDVVFQG (187 aa)) constitute a Lon proteolytic domain. Active-site residues include S1056 and K1099.

Belongs to the peptidase S16 family. In terms of assembly, homohexamer or homoheptamer. Organized in a ring with a central cavity.

Its subcellular location is the mitochondrion matrix. The catalysed reaction is Hydrolysis of proteins in presence of ATP.. In terms of biological role, ATP-dependent serine protease that mediates the selective degradation of misfolded, unassembled or oxidatively damaged polypeptides as well as certain short-lived regulatory proteins in the mitochondrial matrix. May also have a chaperone function in the assembly of inner membrane protein complexes. Participates in the regulation of mitochondrial gene expression and in the maintenance of the integrity of the mitochondrial genome. Binds to mitochondrial DNA in a site-specific manner. The chain is Lon protease homolog, mitochondrial from Yarrowia lipolytica (strain CLIB 122 / E 150) (Yeast).